We begin with the raw amino-acid sequence, 426 residues long: Glutamate-1-semialdehyde 2,1-aminomutase (426 aa).

Lys-265 is subject to N6-(pyridoxal phosphate)lysine.

Belongs to the class-III pyridoxal-phosphate-dependent aminotransferase family. HemL subfamily. As to quaternary structure, homodimer. Pyridoxal 5'-phosphate serves as cofactor.

Its subcellular location is the cytoplasm. The enzyme catalyses (S)-4-amino-5-oxopentanoate = 5-aminolevulinate. The protein operates within porphyrin-containing compound metabolism; protoporphyrin-IX biosynthesis; 5-aminolevulinate from L-glutamyl-tRNA(Glu): step 2/2. This is Glutamate-1-semialdehyde 2,1-aminomutase from Alcanivorax borkumensis (strain ATCC 700651 / DSM 11573 / NCIMB 13689 / SK2).